The primary structure comprises 483 residues: Cytochrome P450 monooxygenase stcF (483 aa).

Cys-424 is a binding site for heme.

It belongs to the cytochrome P450 family. Heme serves as cofactor.

It participates in mycotoxin biosynthesis; sterigmatocystin biosynthesis. Functionally, cytochrome P450 monooxygenase; part of the gene cluster that mediates the biosynthesis of sterigmatocystin (ST), a polyketide-derived furanocoumarin which is part of the most toxic and carcinogenic compounds among the known mycotoxins. The first step in the biosynthesis of sterigmatocystin is the production of hexanoate by the fatty acid synthase (FAS) units stcJ and stcK. The polyketide backbone is assembled by the non-reducing polyketide synthase stcA by condensation of the starter hexanoyl-CoA and 7 malonyl-CoA extender units followed by cyclization and release of norsolorinic acid. Norsolorinic acid is the first stable intermediate in the biosynthesis of sterigmatocystin and is converted into averantin (AVN) by the ketoreductase stcE which reduces the hexanoate ketone to an alcohol. Averantin is then oxidized into 5'-hydroxyaverantin (HAVN) by the cytochrome P450 monooxygenase stcF. 5'-hydroxyaverantin is further converted to 5'-oxyaverantin (OAVN) by the 5'-hydroxyaverantin dehydrogenase stcG. The next step is the conversion of OAVN into averufin (AVF) which is catalyzed by a yet to be identified enzyme. The cytochrome P450 monooxygenase stcB and the flavin-binding monooxygenase stcW are both required for the conversion of averufin to 1-hydroxyversicolorone. The esterase stcI probably catalyzes the formation of versiconal hemiacetal acetate from 1-hydroxyversicolorone. The oxydoreductase stcN then probably catalyzes the biosynthetic step from versiconal to versicolorin B (VERB). The next step is performed by the versicolorin B desaturase stcL to produce versicolorin A (VERA). The ketoreductase stcU and the cytochrome P450 monooxygenase stcS are involved in the conversion of versicolorin A to demethylsterigmatocystin. The Baeyer-Villiger oxidas stcQ and the reductase stcR might be involved in the biosynthetic step from versicolorin A to demethylsterigmatocystin. The final step in the biosynthesis of sterigmatocystin is the methylation of demethylsterigmatocystin catalyzed by the methyltransferase stcP. The sequence is that of Cytochrome P450 monooxygenase stcF from Emericella nidulans (strain FGSC A4 / ATCC 38163 / CBS 112.46 / NRRL 194 / M139) (Aspergillus nidulans).